The chain runs to 77 residues: U14-theraphotoxin-Cg1a 2 (77 aa).

Residues M1–A21 form the signal peptide. Positions S22–R49 are excised as a propeptide. 3 disulfides stabilise this stretch: C50–C64, C57–C69, and C63–C75. K77 carries the post-translational modification Lysine amide.

This sequence belongs to the neurotoxin 10 (Hwtx-1) family. 65 (Jztx-21) subfamily. In terms of tissue distribution, expressed by the venom gland.

It localises to the secreted. In terms of biological role, probable ion channel inhibitor. This is U14-theraphotoxin-Cg1a 2 from Chilobrachys guangxiensis (Chinese earth tiger tarantula).